We begin with the raw amino-acid sequence, 447 residues long: Dihydrolipoyllysine-residue acetyltransferase component of pyruvate dehydrogenase complex (447 aa).

The Lipoyl-binding domain occupies 2–78; sequence PINITMPALS…KVNALIAVLA (77 aa). At K43 the chain carries N6-lipoyllysine. The tract at residues 91-140 is disordered; it reads GNGAAGAVPAPKPKETAETAPAAAPAPAAAPAPQAAAPASPAPADGEGKR. Low complexity predominate over residues 108-134; the sequence is ETAPAAAPAPAAAPAPQAAAPASPAPA. The Peripheral subunit-binding (PSBD) domain occupies 142-179; that stretch reads FSSPLARRLAKEAGIDLSAIAGSGPHGRVVKKDVETAV. The active site involves H420.

The protein belongs to the 2-oxoacid dehydrogenase family. In terms of assembly, forms a 24-polypeptide structural core with octahedral symmetry. (R)-lipoate serves as cofactor.

It catalyses the reaction N(6)-[(R)-dihydrolipoyl]-L-lysyl-[protein] + acetyl-CoA = N(6)-[(R)-S(8)-acetyldihydrolipoyl]-L-lysyl-[protein] + CoA. In terms of biological role, the pyruvate dehydrogenase complex catalyzes the overall conversion of pyruvate to acetyl-CoA and CO(2). It contains multiple copies of three enzymatic components: pyruvate dehydrogenase (E1), dihydrolipoamide acetyltransferase (E2) and lipoamide dehydrogenase (E3). The chain is Dihydrolipoyllysine-residue acetyltransferase component of pyruvate dehydrogenase complex (pdhC) from Rhizobium meliloti (strain 1021) (Ensifer meliloti).